The primary structure comprises 38 residues: Potassium channel toxin alpha-KTx 2.21 (38 aa).

3 cysteine pairs are disulfide-bonded: cysteine 7–cysteine 29, cysteine 13–cysteine 34, and cysteine 17–cysteine 36.

In terms of tissue distribution, expressed by the venom gland.

It localises to the secreted. Its function is as follows. Inhibits human voltage-gated potassium (Kv) channels Kv1.2/KCNA2 and Kv1.3/KCNA3. Does not block human Kv1.1/KCNA1 at 100nM concentration. This Centruroides bonito (Scorpion) protein is Potassium channel toxin alpha-KTx 2.21.